A 117-amino-acid chain; its full sequence is Immunoglobulin lambda variable 7-46 (117 aa).

An N-terminal signal peptide occupies residues Met1–Ser19. The segment at Gln20–Ser44 is framework-1. The 98-residue stretch at Gln20 to Arg117 folds into the Ig-like domain. A disulfide bridge links Cys41 with Cys109. The complementarity-determining-1 stretch occupies residues Thr45–Tyr53. A framework-2 region spans residues Pro54–Tyr70. The tract at residues Asp71 to Ser73 is complementarity-determining-2. The framework-3 stretch occupies residues Asn74–Cys109. The complementarity-determining-3 stretch occupies residues Leu110–Arg117.

In terms of assembly, immunoglobulins are composed of two identical heavy chains and two identical light chains; disulfide-linked.

Its subcellular location is the secreted. It localises to the cell membrane. V region of the variable domain of immunoglobulin light chains that participates in the antigen recognition. Immunoglobulins, also known as antibodies, are membrane-bound or secreted glycoproteins produced by B lymphocytes. In the recognition phase of humoral immunity, the membrane-bound immunoglobulins serve as receptors which, upon binding of a specific antigen, trigger the clonal expansion and differentiation of B lymphocytes into immunoglobulins-secreting plasma cells. Secreted immunoglobulins mediate the effector phase of humoral immunity, which results in the elimination of bound antigens. The antigen binding site is formed by the variable domain of one heavy chain, together with that of its associated light chain. Thus, each immunoglobulin has two antigen binding sites with remarkable affinity for a particular antigen. The variable domains are assembled by a process called V-(D)-J rearrangement and can then be subjected to somatic hypermutations which, after exposure to antigen and selection, allow affinity maturation for a particular antigen. In Homo sapiens (Human), this protein is Immunoglobulin lambda variable 7-46.